A 101-amino-acid polypeptide reads, in one-letter code: Urease subunit beta (101 aa).

The protein belongs to the urease beta subunit family. In terms of assembly, heterotrimer of UreA (gamma), UreB (beta) and UreC (alpha) subunits. Three heterotrimers associate to form the active enzyme.

The protein localises to the cytoplasm. It catalyses the reaction urea + 2 H2O + H(+) = hydrogencarbonate + 2 NH4(+). Its pathway is nitrogen metabolism; urea degradation; CO(2) and NH(3) from urea (urease route): step 1/1. The protein is Urease subunit beta of Bradyrhizobium sp. (strain ORS 278).